The following is a 480-amino-acid chain: MFRSFASPLALVATSAIASNPATTAQHQGSFWIQTFGCQMNKADSERMAGILEAMGYHEAPAELEADLVLYNTCTIRDNAEQKVYSYLGRQARRKRTHPHLKLVVAGCVAQQEGEALLRRIPELDLVMGPQHANRLEALLTQVDNGQQVVATDDNHILEDLTTARRDSTICAWVNVIYGCNERCTYCVVPSVRGKEQSRSPEAIRLEIEGLAARGFREITLLGQNIDAYGRDLPGITPEGRRQNTLTDLLHHIHDVEGIERIRFATSHPRYFTERLIEACFDLPKVCEHFHIPFQSGDNDVLKAMARGYTVERYRRIVNRIRELMPDAAISTDVIVAFPGETDAQFQNTLNLLEEVGFDQVNTAAYSPRPNTPAATWSNQLPEAVKVERLKQLNALVERIALQRNSRYSGKVEQVLAEGINPKKPQQLMGRTRTNRLTFFATEGPQGCRYSPGDLVDIQINSVRAFSLSGTPCEQTRSRH.

The 117-residue stretch at 29–145 (GSFWIQTFGC…LEALLTQVDN (117 aa)) folds into the MTTase N-terminal domain. Positions 38, 74, 108, 180, 184, and 187 each coordinate [4Fe-4S] cluster. The 238-residue stretch at 166 to 403 (RDSTICAWVN…NALVERIALQ (238 aa)) folds into the Radical SAM core domain. Residues 406 to 474 (SRYSGKVEQV…AFSLSGTPCE (69 aa)) enclose the TRAM domain.

The protein belongs to the methylthiotransferase family. MiaB subfamily. As to quaternary structure, monomer. [4Fe-4S] cluster is required as a cofactor.

The protein resides in the cytoplasm. The enzyme catalyses N(6)-dimethylallyladenosine(37) in tRNA + (sulfur carrier)-SH + AH2 + 2 S-adenosyl-L-methionine = 2-methylsulfanyl-N(6)-dimethylallyladenosine(37) in tRNA + (sulfur carrier)-H + 5'-deoxyadenosine + L-methionine + A + S-adenosyl-L-homocysteine + 2 H(+). Functionally, catalyzes the methylthiolation of N6-(dimethylallyl)adenosine (i(6)A), leading to the formation of 2-methylthio-N6-(dimethylallyl)adenosine (ms(2)i(6)A) at position 37 in tRNAs that read codons beginning with uridine. The sequence is that of tRNA-2-methylthio-N(6)-dimethylallyladenosine synthase from Prochlorococcus marinus (strain MIT 9313).